The following is a 369-amino-acid chain: Peptidyl-prolyl cis-trans isomerase D (369 aa).

A PPIase cyclophilin-type domain is found at Tyr8–Ile173. 3 TPR repeats span residues Val218–Tyr251, Val269–Asp302, and Ala306–Asp339.

This sequence belongs to the cyclophilin-type PPIase family. PPIase D subfamily.

Its subcellular location is the cytoplasm. It catalyses the reaction [protein]-peptidylproline (omega=180) = [protein]-peptidylproline (omega=0). In terms of biological role, PPIases accelerate the folding of proteins. It catalyzes the cis-trans isomerization of proline imidic peptide bonds in oligopeptides. The protein is Peptidyl-prolyl cis-trans isomerase D (CPR6) of Eremothecium gossypii (strain ATCC 10895 / CBS 109.51 / FGSC 9923 / NRRL Y-1056) (Yeast).